The chain runs to 237 residues: Ubiquinone biosynthesis O-methyltransferase (237 aa).

S-adenosyl-L-methionine is bound by residues R38, G57, D78, and M122.

It belongs to the methyltransferase superfamily. UbiG/COQ3 family.

The enzyme catalyses a 3-demethylubiquinol + S-adenosyl-L-methionine = a ubiquinol + S-adenosyl-L-homocysteine + H(+). It catalyses the reaction a 3-(all-trans-polyprenyl)benzene-1,2-diol + S-adenosyl-L-methionine = a 2-methoxy-6-(all-trans-polyprenyl)phenol + S-adenosyl-L-homocysteine + H(+). Its pathway is cofactor biosynthesis; ubiquinone biosynthesis. In terms of biological role, O-methyltransferase that catalyzes the 2 O-methylation steps in the ubiquinone biosynthetic pathway. In Methylococcus capsulatus (strain ATCC 33009 / NCIMB 11132 / Bath), this protein is Ubiquinone biosynthesis O-methyltransferase.